We begin with the raw amino-acid sequence, 346 residues long: Holliday junction branch migration complex subunit RuvB (346 aa).

The large ATPase domain (RuvB-L) stretch occupies residues 1–183 (MTEQRIIASS…FGIVQRLEFY (183 aa)). ATP contacts are provided by residues isoleucine 22, arginine 23, glycine 64, lysine 67, threonine 68, threonine 69, 130–132 (EDF), arginine 173, tyrosine 183, and arginine 220. Threonine 68 is a binding site for Mg(2+). Residues 184–254 (SPQELTRIVS…VAQAAMQMLK (71 aa)) are small ATPAse domain (RuvB-S). The segment at 257 to 346 (PEGFDELDRR…PGIGEPGDLF (90 aa)) is head domain (RuvB-H). DNA is bound by residues arginine 293, arginine 312, and arginine 317.

It belongs to the RuvB family. In terms of assembly, homohexamer. Forms an RuvA(8)-RuvB(12)-Holliday junction (HJ) complex. HJ DNA is sandwiched between 2 RuvA tetramers; dsDNA enters through RuvA and exits via RuvB. An RuvB hexamer assembles on each DNA strand where it exits the tetramer. Each RuvB hexamer is contacted by two RuvA subunits (via domain III) on 2 adjacent RuvB subunits; this complex drives branch migration. In the full resolvosome a probable DNA-RuvA(4)-RuvB(12)-RuvC(2) complex forms which resolves the HJ.

The protein localises to the cytoplasm. The enzyme catalyses ATP + H2O = ADP + phosphate + H(+). Its function is as follows. The RuvA-RuvB-RuvC complex processes Holliday junction (HJ) DNA during genetic recombination and DNA repair, while the RuvA-RuvB complex plays an important role in the rescue of blocked DNA replication forks via replication fork reversal (RFR). RuvA specifically binds to HJ cruciform DNA, conferring on it an open structure. The RuvB hexamer acts as an ATP-dependent pump, pulling dsDNA into and through the RuvAB complex. RuvB forms 2 homohexamers on either side of HJ DNA bound by 1 or 2 RuvA tetramers; 4 subunits per hexamer contact DNA at a time. Coordinated motions by a converter formed by DNA-disengaged RuvB subunits stimulates ATP hydrolysis and nucleotide exchange. Immobilization of the converter enables RuvB to convert the ATP-contained energy into a lever motion, pulling 2 nucleotides of DNA out of the RuvA tetramer per ATP hydrolyzed, thus driving DNA branch migration. The RuvB motors rotate together with the DNA substrate, which together with the progressing nucleotide cycle form the mechanistic basis for DNA recombination by continuous HJ branch migration. Branch migration allows RuvC to scan DNA until it finds its consensus sequence, where it cleaves and resolves cruciform DNA. In Xanthomonas euvesicatoria pv. vesicatoria (strain 85-10) (Xanthomonas campestris pv. vesicatoria), this protein is Holliday junction branch migration complex subunit RuvB.